A 125-amino-acid polypeptide reads, in one-letter code: Large ribosomal subunit protein bL12 (125 aa).

The protein belongs to the bacterial ribosomal protein bL12 family. As to quaternary structure, homodimer. Part of the ribosomal stalk of the 50S ribosomal subunit. Forms a multimeric L10(L12)X complex, where L10 forms an elongated spine to which 2 to 4 L12 dimers bind in a sequential fashion. Binds GTP-bound translation factors.

Its function is as follows. Forms part of the ribosomal stalk which helps the ribosome interact with GTP-bound translation factors. Is thus essential for accurate translation. The chain is Large ribosomal subunit protein bL12 from Parabacteroides distasonis (strain ATCC 8503 / DSM 20701 / CIP 104284 / JCM 5825 / NCTC 11152).